We begin with the raw amino-acid sequence, 271 residues long: 2-dehydro-3-deoxyphosphooctonate aldolase (271 aa).

This sequence belongs to the KdsA family.

The protein localises to the cytoplasm. It carries out the reaction D-arabinose 5-phosphate + phosphoenolpyruvate + H2O = 3-deoxy-alpha-D-manno-2-octulosonate-8-phosphate + phosphate. Its pathway is carbohydrate biosynthesis; 3-deoxy-D-manno-octulosonate biosynthesis; 3-deoxy-D-manno-octulosonate from D-ribulose 5-phosphate: step 2/3. The protein operates within bacterial outer membrane biogenesis; lipopolysaccharide biosynthesis. This is 2-dehydro-3-deoxyphosphooctonate aldolase from Campylobacter jejuni subsp. jejuni serotype O:2 (strain ATCC 700819 / NCTC 11168).